Reading from the N-terminus, the 434-residue chain is Iron transporter MagA (434 aa).

10 helical membrane passes run 6-26 (PELT…GMMT), 31-51 (PAVV…FGLV), 56-76 (AVAT…GMKL), 86-106 (KTAI…ALLL), 113-133 (SLGL…AVVI), 176-196 (LLPA…LLFW), 269-289 (SVLL…KFIW), 294-314 (TVLT…VTAL), 321-341 (WPSA…SFLL), and 357-377 (KLVV…LFTM).

This sequence belongs to the monovalent cation:proton antiporter 2 (CPA2) transporter (TC 2.A.37) family.

It is found in the membrane. In terms of biological role, iron transporter, which is required for the synthesis of bacterial magnetic particles (BMPs). Probably involved in the transport of iron from the environment into the cytoplasm across the cell membrane, and then from the cytoplasm into the BMP lipid vesicle across the BMP membrane. The chain is Iron transporter MagA (magA) from Paramagnetospirillum magneticum (strain ATCC 700264 / AMB-1) (Magnetospirillum magneticum).